The chain runs to 548 residues: Chaperone Ric-8A (548 aa).

2 disordered regions span residues 443–484 (DPGH…EGMT) and 517–548 (GKMT…SDTN).

Belongs to the synembryn family.

It localises to the cytoplasm. The protein resides in the cell cortex. Chaperone that specifically binds and folds nascent G alpha proteins prior to G protein heterotrimer formation, promoting their stability and activity: folds GNAI1, GNAO1, GNA13 and GNAQ. Does not fold G(s) G-alpha proteins GNAS nor GNAL. Also acts as a guanine nucleotide exchange factor (GEF) for G alpha proteins by stimulating exchange of bound GDP for free GTP. This Danio rerio (Zebrafish) protein is Chaperone Ric-8A (ric8a).